Reading from the N-terminus, the 362-residue chain is 3-dehydroquinate synthase (362 aa).

NAD(+) contacts are provided by residues 72 to 77 (SGEEAK), 106 to 110 (GVTGD), 130 to 131 (TT), K142, and K151. Residues E184, H246, and H263 each coordinate Zn(2+).

Belongs to the sugar phosphate cyclases superfamily. Dehydroquinate synthase family. The cofactor is Co(2+). Zn(2+) is required as a cofactor. NAD(+) serves as cofactor.

It is found in the cytoplasm. The enzyme catalyses 7-phospho-2-dehydro-3-deoxy-D-arabino-heptonate = 3-dehydroquinate + phosphate. Its pathway is metabolic intermediate biosynthesis; chorismate biosynthesis; chorismate from D-erythrose 4-phosphate and phosphoenolpyruvate: step 2/7. Catalyzes the conversion of 3-deoxy-D-arabino-heptulosonate 7-phosphate (DAHP) to dehydroquinate (DHQ). The chain is 3-dehydroquinate synthase from Bacillus velezensis (strain DSM 23117 / BGSC 10A6 / LMG 26770 / FZB42) (Bacillus amyloliquefaciens subsp. plantarum).